We begin with the raw amino-acid sequence, 207 residues long: 5-amino-6-(5-phosphoribosylamino)uracil reductase (207 aa).

Serine 6 is a substrate binding site. Tryptophan 8 contributes to the NADP(+) binding site. A substrate-binding site is contributed by arginine 22. Aspartate 38 contacts NADP(+). Substrate contacts are provided by leucine 42 and arginine 45. An NADP(+)-binding site is contributed by serine 72. Glutamate 137 contributes to the substrate binding site.

The protein belongs to the HTP reductase family.

It catalyses the reaction 5-amino-6-(5-phospho-D-ribitylamino)uracil + NADP(+) = 5-amino-6-(5-phospho-D-ribosylamino)uracil + NADPH + H(+). The protein operates within cofactor biosynthesis; riboflavin biosynthesis; 5-amino-6-(D-ribitylamino)uracil from GTP: step 3/4. This is 5-amino-6-(5-phosphoribosylamino)uracil reductase (ribD2) from Buchnera aphidicola subsp. Acyrthosiphon pisum (strain APS) (Acyrthosiphon pisum symbiotic bacterium).